The sequence spans 271 residues: Aquaporin-2 (271 aa).

At 1 to 11 (MWELRSIAFSR) the chain is on the cytoplasmic side. The chain crosses the membrane as a helical span at residues 12–32 (AVFAEFLATLLFVFFGLGSAL). The Extracellular segment spans residues 33–40 (NWPQALPS). A helical membrane pass occupies residues 41–59 (VLQIAMAFGLGIGTLVQAL). Residues 60–64 (GHISG) lie on the Cytoplasmic side of the membrane. Residues 65–74 (AHINPAVTVA) constitute an intramembrane region (discontinuously helical). The NPA 1 signature appears at 68-70 (NPA). Residues 75-85 (CLVGCHVSVLR) are Cytoplasmic-facing. A helical membrane pass occupies residues 86-107 (AAFYVAAQLLGAVAGAALLHEI). Residues 108–127 (TPADIRGDLAVNALSNSTTA) are Extracellular-facing. The N-linked (GlcNAc...) asparagine glycan is linked to N123. A helical transmembrane segment spans residues 128–148 (GQAVTVELFLTLQLVLCIFAS). Over 149-156 (TDERRGEN) the chain is Cytoplasmic. Residues 157 to 176 (PGTPALSIGFSVALGHLLGI) form a helical membrane-spanning segment. At 177–180 (HYTG) the chain is on the extracellular side. The segment at residues 181 to 193 (CSMNPARSLAPAV) is an intramembrane region (discontinuously helical). The NPA 2 signature appears at 184–186 (NPA). Over 194–201 (VTGKFDDH) the chain is Extracellular. Residues 202–222 (WVFWIGPLVGAILGSLLYNYV) form a helical membrane-spanning segment. The Cytoplasmic segment spans residues 223 to 271 (LFPPAKSLSERLAVLKGLEPDTDWEEREVRRRQSVELHSPQSLPRGTKA). A disordered region spans residues 248 to 271 (EREVRRRQSVELHSPQSLPRGTKA). S256 carries the post-translational modification Phosphoserine; by PKA. A compositionally biased stretch (polar residues) spans 261–271 (SPQSLPRGTKA).

The protein belongs to the MIP/aquaporin (TC 1.A.8) family. Homotetramer. Interacts with micropeptide MIAC; the interaction leads to a reduction of filamentous actin fibers and inhibition of the EREG/EGFR signaling pathway. In terms of processing, ser-256 phosphorylation is necessary and sufficient for expression at the apical membrane. Endocytosis is not phosphorylation-dependent. Post-translationally, N-glycosylated. Expressed in collecting tubules in kidney medulla (at protein level). Detected in kidney.

Its subcellular location is the apical cell membrane. It localises to the basolateral cell membrane. The protein localises to the cell membrane. The protein resides in the cytoplasmic vesicle membrane. It is found in the golgi apparatus. Its subcellular location is the trans-Golgi network membrane. It catalyses the reaction H2O(in) = H2O(out). It carries out the reaction glycerol(in) = glycerol(out). Its function is as follows. Forms a water-specific channel that provides the plasma membranes of renal collecting duct with high permeability to water, thereby permitting water to move in the direction of an osmotic gradient. Plays an essential role in renal water homeostasis. Could also be permeable to glycerol. This is Aquaporin-2 from Homo sapiens (Human).